The primary structure comprises 89 residues: UPF0250 protein Bphy_0213 (89 aa).

Belongs to the UPF0250 family.

This Paraburkholderia phymatum (strain DSM 17167 / CIP 108236 / LMG 21445 / STM815) (Burkholderia phymatum) protein is UPF0250 protein Bphy_0213.